Reading from the N-terminus, the 312-residue chain is Probable cell division protein WhiA (312 aa).

A DNA-binding region (H-T-H motif) is located at residues 274 to 308 (SLKELGTLVPGGPISKSGVNHRLRKLNAYADELRQ).

The protein belongs to the WhiA family.

In terms of biological role, involved in cell division and chromosome segregation. This Limosilactobacillus fermentum (strain NBRC 3956 / LMG 18251) (Lactobacillus fermentum) protein is Probable cell division protein WhiA.